Consider the following 714-residue polypeptide: Fumarate reductase flavoprotein subunit (714 aa).

Residues 13 to 16 (GGLA), 42 to 44 (SHS), and 49 to 50 (GG) contribute to the FAD site. H43 carries the tele-8alpha-FAD histidine modification. Residues H257 and R273 contribute to the active site. FAD contacts are provided by residues E420 and 436-437 (SV).

It belongs to the FAD-dependent oxidoreductase 2 family. FRD/SDH subfamily. As to quaternary structure, part of an enzyme complex containing three subunits: a flavoprotein (frdA), an iron-sulfur protein (frdB), and diheme cytochrome b (frdC). It depends on FAD as a cofactor.

It localises to the cell inner membrane. It carries out the reaction a quinone + succinate = fumarate + a quinol. In terms of biological role, the fumarate reductase enzyme complex is required for fumarate respiration. The chain is Fumarate reductase flavoprotein subunit (frdA) from Helicobacter pylori (strain J99 / ATCC 700824) (Campylobacter pylori J99).